The primary structure comprises 2185 residues: Genome polyprotein (2185 aa).

A lipid anchor (N-myristoyl glycine; by host) is attached at glycine 2. At glycine 2–glutamine 1495 the chain is on the cytoplasmic side. The interval phenylalanine 566 to valine 582 is amphipathic alpha-helix. Active-site for protease 2A activity residues include histidine 872 and aspartate 890. Residues cysteine 907 and cysteine 909 each contribute to the Zn(2+) site. The For protease 2A activity role is filled by cysteine 961. The Zn(2+) site is built by cysteine 967 and histidine 969. The segment at asparagine 1101 to glutamine 1173 is membrane-binding. Residues asparagine 1101–threonine 1239 form an oligomerization region. The tract at residues alanine 1122 to glutamine 1126 is RNA-binding. The SF3 helicase domain maps to glutamate 1205–asparagine 1361. Zn(2+)-binding residues include cysteine 1369, cysteine 1381, and cysteine 1386. Residues cysteine 1369–cysteine 1386 form a C4-type; degenerate zinc finger. The segment at glutamate 1413–valine 1420 is RNA-binding. The oligomerization stretch occupies residues leucine 1424–glutamine 1429. An intramembrane segment occupies alanine 1496–tyrosine 1511. Residues lysine 1512 to phenylalanine 2185 lie on the Cytoplasmic side of the membrane. The residue at position 1521 (tyrosine 1521) is an O-(5'-phospho-RNA)-tyrosine. The Peptidase C3 domain occupies glycine 1541–phenylalanine 1719. Catalysis depends on for protease 3C activity residues histidine 1580, glutamate 1611, and cysteine 1687. The region spanning glycine 1950–leucine 2066 is the RdRp catalytic domain. 2 residues coordinate Mg(2+): aspartate 1956 and aspartate 2052.

The protein belongs to the picornaviruses polyprotein family. In terms of assembly, interacts with capsid protein VP1 and capsid protein VP3 to form heterotrimeric protomers. As to quaternary structure, interacts with capsid protein VP0, and capsid protein VP3 to form heterotrimeric protomers. Five protomers subsequently associate to form pentamers which serve as building blocks for the capsid. Interacts with capsid protein VP2, capsid protein VP3 and capsid protein VP4 following cleavage of capsid protein VP0. Interacts with host CXADR. Interacts with capsid protein VP1 and capsid protein VP3 in the mature capsid. In terms of assembly, interacts with capsid protein VP0 and capsid protein VP1 to form heterotrimeric protomers. Five protomers subsequently associate to form pentamers which serve as building blocks for the capsid. Interacts with capsid protein VP4 in the mature capsid. Interacts with protein 2C; this interaction may be important for virion morphogenesis. As to quaternary structure, interacts with capsid protein VP1 and capsid protein VP3. Homodimer. In terms of assembly, homohexamer; forms a hexameric ring structure with 6-fold symmetry characteristic of AAA+ ATPases. Interacts (via N-terminus) with host RTN3 (via reticulon domain); this interaction is important for viral replication. Interacts with capsid protein VP3; this interaction may be important for virion morphogenesis. As to quaternary structure, interacts with protein 3CD. Homodimer. Interacts with host GBF1. Interacts (via GOLD domain) with host ACBD3 (via GOLD domain); this interaction allows the formation of a viral protein 3A/ACBD3 heterotetramer with a 2:2 stoichiometry, which will stimulate the recruitment of host PI4KB in order to synthesize PI4P at the viral RNA replication sites. In terms of assembly, interacts with RNA-directed RNA polymerase. As to quaternary structure, interacts with protein 3AB and with RNA-directed RNA polymerase. Interacts with Viral protein genome-linked and with protein 3CD. Mg(2+) is required as a cofactor. In terms of processing, specific enzymatic cleavages in vivo by the viral proteases yield processing intermediates and the mature proteins. Post-translationally, myristoylation is required for the formation of pentamers during virus assembly. Further assembly of 12 pentamers and a molecule of genomic RNA generates the provirion. During virion maturation, immature virions are rendered infectious following cleavage of VP0 into VP4 and VP2. This maturation seems to be an autocatalytic event triggered by the presence of RNA in the capsid and it is followed by a conformational change infectious virion. In terms of processing, myristoylation is required during RNA encapsidation and formation of the mature virus particle. Post-translationally, VPg is uridylylated by the polymerase into VPg-pUpU. This acts as a nucleotide-peptide primer for the genomic RNA replication.

The protein resides in the virion. It is found in the host cytoplasm. Its subcellular location is the host cytoplasmic vesicle membrane. The protein localises to the host nucleus. It catalyses the reaction a ribonucleoside 5'-triphosphate + H2O = a ribonucleoside 5'-diphosphate + phosphate + H(+). The enzyme catalyses Selective cleavage of Tyr-|-Gly bond in the picornavirus polyprotein.. It carries out the reaction RNA(n) + a ribonucleoside 5'-triphosphate = RNA(n+1) + diphosphate. The catalysed reaction is Selective cleavage of Gln-|-Gly bond in the poliovirus polyprotein. In other picornavirus reactions Glu may be substituted for Gln, and Ser or Thr for Gly.. With respect to regulation, replication or transcription is subject to high level of random mutations by the nucleotide analog ribavirin. Forms an icosahedral capsid of pseudo T=3 symmetry with capsid proteins VP2 and VP3. The capsid is 300 Angstroms in diameter, composed of 60 copies of each capsid protein and enclosing the viral positive strand RNA genome. Capsid protein VP1 mainly forms the vertices of the capsid. Capsid protein VP1 interacts with host CXADR to provide virion attachment to target host cells. This attachment induces virion internalization. Tyrosine kinases are probably involved in the entry process. After binding to its receptor, the capsid undergoes conformational changes. Capsid protein VP1 N-terminus (that contains an amphipathic alpha-helix) and capsid protein VP4 are externalized. Together, they shape a pore in the host membrane through which viral genome is translocated to host cell cytoplasm. In terms of biological role, forms an icosahedral capsid of pseudo T=3 symmetry with capsid proteins VP2 and VP3. The capsid is 300 Angstroms in diameter, composed of 60 copies of each capsid protein and enclosing the viral positive strand RNA genome. Functionally, lies on the inner surface of the capsid shell. After binding to the host receptor, the capsid undergoes conformational changes. Capsid protein VP4 is released, Capsid protein VP1 N-terminus is externalized, and together, they shape a pore in the host membrane through which the viral genome is translocated into the host cell cytoplasm. Its function is as follows. Component of immature procapsids, which is cleaved into capsid proteins VP4 and VP2 after maturation. Allows the capsid to remain inactive before the maturation step. Cysteine protease that cleaves viral polyprotein and specific host proteins. It is responsible for the autocatalytic cleavage between the P1 and P2 regions, which is the first cleavage occurring in the polyprotein. Also cleaves the host translation initiation factor EIF4G1, in order to shut down the capped cellular mRNA translation. Inhibits the host nucleus-cytoplasm protein and RNA trafficking by cleaving host members of the nuclear pores. Counteracts stress granule formation probably by antagonizing its assembly or promoting its dissassembly. In terms of biological role, plays an essential role in the virus replication cycle by acting as a viroporin. Creates a pore in the host endoplasmic reticulum and as a consequence releases Ca2+ in the cytoplasm of infected cell. In turn, high levels of cytoplasmic calcium may trigger membrane trafficking and transport of viral ER-associated proteins to viroplasms, sites of viral genome replication. Functionally, induces and associates with structural rearrangements of intracellular membranes. Displays RNA-binding, nucleotide binding and NTPase activities. May play a role in virion morphogenesis and viral RNA encapsidation by interacting with the capsid protein VP3. Its function is as follows. Localizes the viral replication complex to the surface of membranous vesicles. Together with protein 3CD binds the Cis-Active RNA Element (CRE) which is involved in RNA synthesis initiation. Acts as a cofactor to stimulate the activity of 3D polymerase, maybe through a nucleid acid chaperone activity. Localizes the viral replication complex to the surface of membranous vesicles. It inhibits host cell endoplasmic reticulum-to-Golgi apparatus transport and causes the disassembly of the Golgi complex, possibly through GBF1 interaction. This would result in depletion of MHC, trail receptors and IFN receptors at the host cell surface. Plays an essential role in viral RNA replication by recruiting ACBD3 and PI4KB at the viral replication sites, thereby allowing the formation of the rearranged membranous structures where viral replication takes place. In terms of biological role, acts as a primer for viral RNA replication and remains covalently bound to viral genomic RNA. VPg is uridylylated prior to priming replication into VPg-pUpU. The oriI viral genomic sequence may act as a template for this. The VPg-pUpU is then used as primer on the genomic RNA poly(A) by the RNA-dependent RNA polymerase to replicate the viral genome. During genome replication, the VPg-RNA linkage is removed by the host TDP2, thereby accelerating replication. During the late stage of the replication cycle, host TDP2 is excluded from sites of viral RNA synthesis and encapsidation, allowing for the generation of progeny virions. Functionally, involved in the viral replication complex and viral polypeptide maturation. It exhibits protease activity with a specificity and catalytic efficiency that is different from protease 3C. Protein 3CD lacks polymerase activity. Protein 3CD binds to the 5'UTR of the viral genome. Its function is as follows. Replicates the viral genomic RNA on the surface of intracellular membranes. May form linear arrays of subunits that propagate along a strong head-to-tail interaction called interface-I. Covalently attaches UMP to a tyrosine of VPg, which is used to prime RNA synthesis. The positive stranded RNA genome is first replicated at virus induced membranous vesicles, creating a dsRNA genomic replication form. This dsRNA is then used as template to synthesize positive stranded RNA genomes. ss(+)RNA genomes are either translated, replicated or encapsidated. Major viral protease that mediates proteolytic processing of the polyprotein. Cleaves host EIF5B, contributing to host translation shutoff. Also cleaves host PABPC1, contributing to host translation shutoff. Cleaves host NLRP1, triggers host N-glycine-mediated degradation of the autoinhibitory NLRP1 N-terminal fragment. The chain is Genome polyprotein from Sus scrofa (Pig).